Here is a 193-residue protein sequence, read N- to C-terminus: CD70 antigen (193 aa).

Residues 1–17 lie on the Cytoplasmic side of the membrane; sequence MPEEGSGCSVRRRPYGC. A helical; Signal-anchor for type II membrane protein membrane pass occupies residues 18-38; it reads VLRAALVPLVAGLVICLVVCI. The Extracellular portion of the chain corresponds to 39-193; sequence QRFAQAQQQL…TFFGVQWVRP (155 aa). A THD domain is found at 56–191; the sequence is DVAELQLNHT…DETFFGVQWV (136 aa). The N-linked (GlcNAc...) asparagine glycan is linked to N63. 2 disulfides stabilise this stretch: C115-C151 and C133-C168. N-linked (GlcNAc...) asparagine glycosylation is present at N170.

This sequence belongs to the tumor necrosis factor family. Homotrimer. Post-translationally, N-glycosylated.

It is found in the cell membrane. Functionally, expressed at the plasma membrane of B cells, it is the ligand of the CD27 receptor which is specifically expressed at the surface of T cells. The CD70-CD27 signaling pathway mediates antigen-specific T cell activation and expansion which in turn provides immune surveillance of B cells. This chain is CD70 antigen, found in Homo sapiens (Human).